A 400-amino-acid chain; its full sequence is Argininosuccinate synthase (400 aa).

9 to 17 (AYSGGLDTS) is a binding site for ATP. Tyr87 is a binding site for L-citrulline. Residue Gly117 coordinates ATP. The L-aspartate site is built by Thr119, Asn123, and Asp124. An L-citrulline-binding site is contributed by Asn123. L-citrulline is bound by residues Arg127, Ser176, Ser185, Glu261, and Tyr273.

Belongs to the argininosuccinate synthase family. Type 1 subfamily. As to quaternary structure, homotetramer.

The protein localises to the cytoplasm. It catalyses the reaction L-citrulline + L-aspartate + ATP = 2-(N(omega)-L-arginino)succinate + AMP + diphosphate + H(+). The protein operates within amino-acid biosynthesis; L-arginine biosynthesis; L-arginine from L-ornithine and carbamoyl phosphate: step 2/3. This Chlorobium luteolum (strain DSM 273 / BCRC 81028 / 2530) (Pelodictyon luteolum) protein is Argininosuccinate synthase.